A 320-amino-acid chain; its full sequence is MINSKSKKKESNALVLKSLLREPYNKVCADCKRNEQPRWASWNLGVFICIRCSGVHRSLGVHVSRVKSVDLDSWTDEQTENMTRWGNERANLYWEAKLAGGHVPSDSKIATFIKTKYEFKKWVLYPEIPSPETLKPEQNTRPVSEVNASLDLNTASRSSSAHSVKSTSSATVTNVTSKKEAISATTSLAQSSPNLASLSKQPSTVHAPSTRQRDLKSSILSLYASPRPQVSSSSITTNATYQNLPSPVSTSTTSSQPYGAFHQPATTGSSFVADKWKMPMFTSNVTSAQPSARASPVQSNSSRPRSSLDSKIINSHDVWK.

The Arf-GAP domain occupies 13–132 (ALVLKSLLRE…VLYPEIPSPE (120 aa)). The segment at 28–52 (CADCKRNEQPRWASWNLGVFICIRC) adopts a C4-type zinc-finger fold. Disordered regions lie at residues 153–212 (NTAS…STRQ), 227–261 (RPQV…YGAF), and 284–320 (NVTS…DVWK). Low complexity predominate over residues 154 to 176 (TASRSSSAHSVKSTSSATVTNVT). Polar residues-rich tracts occupy residues 183–210 (SATT…APST) and 228–244 (PQVS…YQNL). Low complexity-rich tracts occupy residues 245 to 257 (PSPV…SSQP) and 295 to 310 (SPVQ…SLDS).

It localises to the cytoplasm. Its subcellular location is the golgi apparatus. Functionally, GTPase-activating protein for the ADP ribosylation factor family. This is an uncharacterized protein from Schizosaccharomyces pombe (strain 972 / ATCC 24843) (Fission yeast).